Consider the following 417-residue polypeptide: Carboxypeptidase A2 (417 aa).

The N-terminal stretch at 1–16 (MRLTPLLVALFGYIYC) is a signal peptide. A propeptide spans 17-112 (QETFVGDQVL…EMLFNQQRER (96 aa)) (activation peptide). Positions 120 to 412 (AYHTLEEIYQ…LGLKTIMEHV (293 aa)) constitute a Peptidase M14 domain. Positions 177 and 180 each coordinate Zn(2+). Substrate is bound by residues 177–180 (HARE), R235, and 252–253 (NR). A disulfide bridge connects residues C246 and C269. H304 lines the Zn(2+) pocket. A substrate-binding site is contributed by 305-306 (SY). Residues C318 and C352 are joined by a disulfide bond. Y356 contributes to the substrate binding site. E378 acts as the Proton donor/acceptor in catalysis.

This sequence belongs to the peptidase M14 family. Requires Zn(2+) as cofactor.

The protein localises to the secreted. The catalysed reaction is Similar to that of carboxypeptidase A (EC 3.4.17.1), but with a preference for bulkier C-terminal residues.. Carboxypeptidase that catalyzes the release of a C-terminal amino acid, with a preference for large aromatic C-terminal residues. The protein is Carboxypeptidase A2 (Cpa2) of Mus musculus (Mouse).